The primary structure comprises 360 residues: Peptide chain release factor 1 (360 aa).

An N5-methylglutamine modification is found at Q237.

It belongs to the prokaryotic/mitochondrial release factor family. Post-translationally, methylated by PrmC. Methylation increases the termination efficiency of RF1.

It is found in the cytoplasm. Peptide chain release factor 1 directs the termination of translation in response to the peptide chain termination codons UAG and UAA. The sequence is that of Peptide chain release factor 1 from Saccharophagus degradans (strain 2-40 / ATCC 43961 / DSM 17024).